The primary structure comprises 211 residues: Probable molybdenum cofactor guanylyltransferase (211 aa).

Residues Leu-21–Gly-23, Lys-33, Asp-84, and Asp-116 contribute to the GTP site. A Mg(2+)-binding site is contributed by Asp-116.

Belongs to the MobA family. Mg(2+) is required as a cofactor.

Its subcellular location is the cytoplasm. It catalyses the reaction Mo-molybdopterin + GTP + H(+) = Mo-molybdopterin guanine dinucleotide + diphosphate. Transfers a GMP moiety from GTP to Mo-molybdopterin (Mo-MPT) cofactor (Moco or molybdenum cofactor) to form Mo-molybdopterin guanine dinucleotide (Mo-MGD) cofactor. The protein is Probable molybdenum cofactor guanylyltransferase of Rhodopirellula baltica (strain DSM 10527 / NCIMB 13988 / SH1).